Consider the following 406-residue polypeptide: Glutamyl-tRNA reductase (406 aa).

Residues T50–R53, S107, E112–Q114, and Q118 contribute to the substrate site. Catalysis depends on C51, which acts as the Nucleophile. Position 187 to 192 (G187 to G192) interacts with NADP(+).

The protein belongs to the glutamyl-tRNA reductase family. In terms of assembly, homodimer.

The catalysed reaction is (S)-4-amino-5-oxopentanoate + tRNA(Glu) + NADP(+) = L-glutamyl-tRNA(Glu) + NADPH + H(+). Its pathway is porphyrin-containing compound metabolism; protoporphyrin-IX biosynthesis; 5-aminolevulinate from L-glutamyl-tRNA(Glu): step 1/2. Functionally, catalyzes the NADPH-dependent reduction of glutamyl-tRNA(Glu) to glutamate 1-semialdehyde (GSA). The protein is Glutamyl-tRNA reductase of Aquifex aeolicus (strain VF5).